The following is a 1299-amino-acid chain: DNA-directed RNA polymerase subunit beta' (1299 aa).

Cys-60, Cys-62, Cys-75, and Cys-78 together coordinate Zn(2+). 3 residues coordinate Mg(2+): Asp-535, Asp-537, and Asp-539. Residues Cys-877, Cys-954, Cys-961, and Cys-964 each coordinate Zn(2+).

Belongs to the RNA polymerase beta' chain family. In terms of assembly, the RNAP catalytic core consists of 2 alpha, 1 beta, 1 beta' and 1 omega subunit. When a sigma factor is associated with the core the holoenzyme is formed, which can initiate transcription. Mg(2+) is required as a cofactor. Requires Zn(2+) as cofactor.

It carries out the reaction RNA(n) + a ribonucleoside 5'-triphosphate = RNA(n+1) + diphosphate. Functionally, DNA-dependent RNA polymerase catalyzes the transcription of DNA into RNA using the four ribonucleoside triphosphates as substrates. This is DNA-directed RNA polymerase subunit beta' from Paenarthrobacter aurescens (strain TC1).